The sequence spans 234 residues: MCGNHLKRVAAPRTWPITRKTSKWVAKPMPGAHSEERGMPLVVVLRDLLKVADNTSEIKKILHEGKVLVDGKVRKDYRYTVGMFDTISIPAINANYRVVIGMDGKFHLVPVTDASAKICKIVNKTALRGGKIQLNLHDGTTMIASNDYKTKDSVILKMPERKIDQHFTYAVGSLVMVTEGKHSGEIGKVKEIKVVRSSAPNTVVITTPEGDFETIEQYVFVIGKDSPAVQGVKA.

An S4 RNA-binding domain is found at 39–102 (MPLVVVLRDL…NANYRVVIGM (64 aa)).

It belongs to the eukaryotic ribosomal protein eS4 family.

This Methanocella arvoryzae (strain DSM 22066 / NBRC 105507 / MRE50) protein is Small ribosomal subunit protein eS4.